A 212-amino-acid polypeptide reads, in one-letter code: 3-isopropylmalate dehydratase small subunit (212 aa).

This sequence belongs to the LeuD family. LeuD type 1 subfamily. In terms of assembly, heterodimer of LeuC and LeuD.

The enzyme catalyses (2R,3S)-3-isopropylmalate = (2S)-2-isopropylmalate. It functions in the pathway amino-acid biosynthesis; L-leucine biosynthesis; L-leucine from 3-methyl-2-oxobutanoate: step 2/4. Catalyzes the isomerization between 2-isopropylmalate and 3-isopropylmalate, via the formation of 2-isopropylmaleate. The polypeptide is 3-isopropylmalate dehydratase small subunit (Pseudomonas aeruginosa (strain UCBPP-PA14)).